The primary structure comprises 670 residues: MERNGGHYTDKTRVLDIKPLRTLRPVFPSGNQAPPFVCAPPFGPFPPGFSSFYPFSSSQANQHTPDLNQAQYPPQHQQPQNPPPVYQQQPPQHASEPSLVTPLRSFRSPDVSNGNAELEGSTVKRRIPKKRPISRPENMNFESGINVADRENGNRELVLSVLMRFDALRRRFAQLEDAKEAVSGIIKRPDLKSGSTCMGRGVRTNTKKRPGIVPGVEIGDVFFFRFEMCLVGLHSPSMAGIDYLVVKGETEEEPIATSIVSSGYYDNDEGNPDVLIYTGQGGNADKDKQSSDQKLERGNLALEKSLRRDSAVRVIRGLKEASHNAKIYIYDGLYEIKESWVEKGKSGHNTFKYKLVRAPGQPPAFASWTAIQKWKTGVPSRQGLILPDMTSGVESIPVSLVNEVDTDNGPAYFTYSTTVKYSESFKLMQPSFGCDCANLCKPGNLDCHCIRKNGGDFPYTGNGILVSRKPMIYECSPSCPCSTCKNKVTQMGVKVRLEVFKTANRGWGLRSWDAIRAGSFICIYVGEAKDKSKVQQTMANDDYTFDTTNVYNPFKWNYEPGLADEDACEEMSEESEIPLPLIISAKNVGNVARFMNHSCSPNVFWQPVSYENNSQLFVHVAFFAISHIPPMTELTYDYGVSRPSGTQNGNPLYGKRKCFCGSAYCRGSFG.

A disordered region spans residues 53–140 (YPFSSSQANQ…RPISRPENMN (88 aa)). A compositionally biased stretch (low complexity) spans 68–79 (NQAQYPPQHQQP). The span at 123–133 (VKRRIPKKRPI) shows a compositional bias: basic residues. In terms of domain architecture, YDG spans 211 to 357 (GIVPGVEIGD…HNTFKYKLVR (147 aa)). Residues 432–492 (FGCDCANLCK…TCKNKVTQMG (61 aa)) form the Pre-SET domain. Residues Cys434, Cys436, Cys440, Cys447, Cys449, Cys475, Cys479, Cys481, and Cys484 each contribute to the Zn(2+) site. The 145-residue stretch at 495–639 (VRLEVFKTAN…PMTELTYDYG (145 aa)) folds into the SET domain. S-adenosyl-L-methionine is bound by residues 505–507 (RGW), Asp541, Tyr543, Arg593, and 596–597 (NH). 4 residues coordinate Zn(2+): Cys599, Cys658, Cys660, and Cys665. The Post-SET domain occupies 654–670 (GKRKCFCGSAYCRGSFG).

This sequence belongs to the class V-like SAM-binding methyltransferase superfamily. Histone-lysine methyltransferase family. Suvar3-9 subfamily. Expressed in leaves stems and flowers.

It localises to the nucleus. It is found in the chromosome. Its subcellular location is the centromere. It catalyses the reaction L-lysyl(9)-[histone H3] + 2 S-adenosyl-L-methionine = N(6),N(6)-dimethyl-L-lysyl(9)-[histone H3] + 2 S-adenosyl-L-homocysteine + 2 H(+). Functionally, histone methyltransferase. Methylates 'Lys-9' of histone H3. H3 'Lys-9' methylation represents a specific tag for epigenetic transcriptional repression. This is Histone-lysine N-methyltransferase, H3 lysine-9 specific SUVH1 (SUVH1) from Arabidopsis thaliana (Mouse-ear cress).